Reading from the N-terminus, the 133-residue chain is Small ribosomal subunit protein uS8 (133 aa).

The protein belongs to the universal ribosomal protein uS8 family. Part of the 30S ribosomal subunit. Contacts proteins S5 and S12.

One of the primary rRNA binding proteins, it binds directly to 16S rRNA central domain where it helps coordinate assembly of the platform of the 30S subunit. The protein is Small ribosomal subunit protein uS8 of Chloroflexus aggregans (strain MD-66 / DSM 9485).